The sequence spans 360 residues: Lipid-A-disaccharide synthase (360 aa).

The protein belongs to the LpxB family.

It catalyses the reaction a lipid X + a UDP-2-N,3-O-bis[(3R)-3-hydroxyacyl]-alpha-D-glucosamine = a lipid A disaccharide + UDP + H(+). The protein operates within bacterial outer membrane biogenesis; LPS lipid A biosynthesis. Condensation of UDP-2,3-diacylglucosamine and 2,3-diacylglucosamine-1-phosphate to form lipid A disaccharide, a precursor of lipid A, a phosphorylated glycolipid that anchors the lipopolysaccharide to the outer membrane of the cell. This Helicobacter pylori (strain HPAG1) protein is Lipid-A-disaccharide synthase.